The chain runs to 204 residues: Arginine exporter protein ArgO (204 aa).

6 consecutive transmembrane segments (helical) span residues 1-21 (MWAVYLQGVLLGAAMILPLGP), 37-57 (LMVALLCAVSDMVLISAGIFG), 67-87 (LLLGAVTCGGVAFLLWFGWGA), 111-131 (IIATMLAVTWLNPHVYLDTFV), 154-174 (TASFTWFFALALLAAWLAPWL), and 179-199 (VQRVINFFVGMVMWGIALQLA).

This sequence belongs to the LysE/ArgO transporter (TC 2.A.75) family.

The protein resides in the cell inner membrane. The enzyme catalyses L-arginine(in) = L-arginine(out). Involved in the export of arginine. Important to control the intracellular level of arginine and the correct balance between arginine and lysine. This is Arginine exporter protein ArgO from Pectobacterium atrosepticum (strain SCRI 1043 / ATCC BAA-672) (Erwinia carotovora subsp. atroseptica).